The chain runs to 335 residues: Glucokinase (335 aa).

Residue 11–16 (ADIGGT) coordinates ATP.

This sequence belongs to the bacterial glucokinase family.

It is found in the cytoplasm. It catalyses the reaction D-glucose + ATP = D-glucose 6-phosphate + ADP + H(+). The sequence is that of Glucokinase from Stenotrophomonas maltophilia (strain R551-3).